Here is a 262-residue protein sequence, read N- to C-terminus: Pimeloyl-[acyl-carrier protein] methyl ester esterase (262 aa).

The AB hydrolase-1 domain maps to 15-242; sequence HLVLLHGWGL…AAHAPFISHP (228 aa). Substrate is bound by residues Trp22, 82-83, and 143-147; these read SL and FLALQ. Catalysis depends on Ser82, which acts as the Nucleophile. Active-site residues include Asp207 and His235. Substrate is bound at residue His235.

This sequence belongs to the AB hydrolase superfamily. Carboxylesterase BioH family. In terms of assembly, monomer.

The protein localises to the cytoplasm. The catalysed reaction is 6-carboxyhexanoyl-[ACP] methyl ester + H2O = 6-carboxyhexanoyl-[ACP] + methanol + H(+). The protein operates within cofactor biosynthesis; biotin biosynthesis. In terms of biological role, the physiological role of BioH is to remove the methyl group introduced by BioC when the pimeloyl moiety is complete. It allows to synthesize pimeloyl-ACP via the fatty acid synthetic pathway through the hydrolysis of the ester bonds of pimeloyl-ACP esters. In Shigella flexneri, this protein is Pimeloyl-[acyl-carrier protein] methyl ester esterase.